Here is a 150-residue protein sequence, read N- to C-terminus: NADH-quinone oxidoreductase subunit A (150 aa).

3 helical membrane passes run 14–34 (WAFA…LLGA), 70–90 (LVAM…AWAV), and 98–118 (LGFI…FYLV).

Belongs to the complex I subunit 3 family. In terms of assembly, NDH-1 is composed of 13 different subunits. Subunits NuoA, H, J, K, L, M, N constitute the membrane sector of the complex.

The protein resides in the cell inner membrane. The catalysed reaction is a quinone + NADH + 5 H(+)(in) = a quinol + NAD(+) + 4 H(+)(out). Functionally, NDH-1 shuttles electrons from NADH, via FMN and iron-sulfur (Fe-S) centers, to quinones in the respiratory chain. The immediate electron acceptor for the enzyme in this species is believed to be ubiquinone. Couples the redox reaction to proton translocation (for every two electrons transferred, four hydrogen ions are translocated across the cytoplasmic membrane), and thus conserves the redox energy in a proton gradient. The sequence is that of NADH-quinone oxidoreductase subunit A from Proteus mirabilis (strain HI4320).